Reading from the N-terminus, the 824-residue chain is MEFIPTQTFYNRRYQPRPWTPRPTIQVIRPRPRPQRQAGQLAQLISAVNKLTMRAVPQQKPRKNRKNKKQKQKQQAPQNNTNQKKQPPKKKPAQKKKKPGRRERMCMKIENDCIFEVKHEGKVTGYACLVGDKVMKPAHVKGTIDNADLAKLAFKRSSKYDLECAQIPVHMKSDASKFTHEKPEGYYNWHHGAVQYSGGRFTIPTGAGKPGDSGRPIFDNKGRVVAIVLGGANEGARTALSVVTWNKDIVTKITPEGAEEWSLAIPVMCLLANTTFPCSQPPCIPCCYEKEPEETLRMLEDNVMRPGYYQLLQASLTCSPHRQRRSTKDNFNVYKATRPYLAHCPDCGEGHSCHSPVALERIRNEATDGTLKIQVSLQIGIGTDDSHDWTKLRYMDNHIPADAGRAGLFVRTSAPCTITGTMGHFILARCPKGETLTVGFTDSRKISHSCTHPFHHDPPVIGREKFHSRPQHGKELPCSTYVQSNAATAEEIEVHMPPDTPDRTLLSQQSGNVKITVNSQTVRYKCNCGGSNEGLITTDKVINNCKVDQCHAAVTNHKKWQYNSPLVPRNAELGDRKGKIHIPFPLANVTCMVPKARNPTVTYGKNQVIMLLYPDHPTLLSYRSMGEEPNYQEEWVTHKKEVVLTVPTEGLEVTWGNNEPYKYWPQLSANGTAHGHPHEIILYYYELYPTMTVVVVSVASFILLSMVGMAVGMCMCARRRCITPYELTPGATVPFLLSLICCIRTAKAATYQEAAVYLWNEQQPLFWLQALIPLAALIVLCNCLRLLPCCCKTLAFLSRNEHRCPHCERVRTRNSDPEHGGSTV.

Residues 1-10 (MEFIPTQTFY) show a composition bias toward polar residues. The disordered stretch occupies residues 1-104 (MEFIPTQTFY…KKKKPGRRER (104 aa)). Positions 22–44 (RPTIQVIRPRPRPQRQAGQLAQL) are enriched in low complexity. Residues 36–68 (RQAGQLAQLISAVNKLTMRAVPQQKPRKNRKNK) are host transcription inhibition. Over residues 60–72 (KPRKNRKNKKQKQ) the composition is skewed to basic residues. The Nuclear localization signal motif lies at 61–99 (PRKNRKNKKQKQKQQAPQNNTNQKKQPPKKKPAQKKKKP). Residues 73–85 (KQQAPQNNTNQKK) are compositionally biased toward low complexity. The interval 84 to 114 (KKQPPKKKPAQKKKKPGRRERMCMKIENDCI) is binding to the viral RNA. Residues 86 to 101 (QPPKKKPAQKKKKPGR) show a composition bias toward basic residues. 2 ribosome-binding regions span residues 91-100 (KPAQKKKKPG) and 99-113 (PGRR…ENDC). A disulfide bridge connects residues cysteine 113 and cysteine 128. In terms of domain architecture, Peptidase S3 spans 113 to 261 (CIFEVKHEGK…KITPEGAEEW (149 aa)). Histidine 139 acts as the Charge relay system in catalysis. Residues 144 to 154 (IDNADLAKLAF) carry the Nuclear export signal motif. Aspartate 161 functions as the Charge relay system in the catalytic mechanism. Residues 183-193 (PEGYYNWHHGA) form a dimerization of the capsid protein region. Serine 213 functions as the Charge relay system in the catalytic mechanism. Residues 219–223 (DNKGR) are dimerization of the capsid protein. A functions as an uncleaved signal peptide for the precursor of protein E3/E2 region spans residues 262–274 (SLAIPVMCLLANT). Residues 262-692 (SLAIPVMCLL…YYYELYPTMT (431 aa)) are Extracellular-facing. Asparagine 273, asparagine 588, and asparagine 670 each carry an N-linked (GlcNAc...) asparagine; by host glycan. The helical transmembrane segment at 693–713 (VVVVSVASFILLSMVGMAVGM) threads the bilayer. Topologically, residues 714–748 (CMCARRRCITPYELTPGATVPFLLSLICCIRTAKA) are cytoplasmic. Residues cysteine 721, cysteine 741, and cysteine 742 are each lipidated (S-palmitoyl cysteine; by host). The tract at residues 721 to 741 (CITPYELTPGATVPFLLSLIC) is transient transmembrane before p62-6K protein processing. Residues 749–763 (ATYQEAAVYLWNEQQ) are Extracellular-facing. Residues 764–784 (PLFWLQALIPLAALIVLCNCL) form a helical membrane-spanning segment. The Cytoplasmic segment spans residues 785-795 (RLLPCCCKTLA).

This sequence belongs to the alphavirus frameshifted structural polyprotein family. Homodimer. Homomultimer. Interacts with host karyopherin KPNA4; this interaction allows the nuclear import of the viral capsid protein. Interacts with spike glycoprotein E2. Interacts with host IRAK1; the interaction leads to inhibition of IRAK1-dependent signaling. As to quaternary structure, the precursor of protein E3/E2 and E1 form a heterodimer shortly after synthesis. In terms of assembly, processing of the precursor of protein E3/E2 into E2 and E3 results in a heterodimer of the spike glycoproteins E2 and E1. Spike at virion surface are constituted of three E2-E1 heterodimers. Interacts with 6K protein. Interacts with host MXRA8; this interaction mediates virus entry. In terms of processing, specific enzymatic cleavages in vivo yield mature proteins. Capsid protein is auto-cleaved during polyprotein translation, unmasking a signal peptide at the N-terminus of the precursor of E3/E2. The remaining polyprotein is then targeted to the host endoplasmic reticulum, where host signal peptidase cleaves it into pE2 and TF. pE2 is further processed to mature E3 and E2 by host furin in trans-Golgi vesicle. Post-translationally, palmitoylated via thioester bonds. These palmitoylations may induce disruption of the C-terminus transmembrane. This would result in the reorientation of E2 C-terminus from lumenal to cytoplasmic side. Palmitoylated via thioester bonds.

Its subcellular location is the virion. The protein localises to the host cytoplasm. The protein resides in the host cell membrane. It localises to the host nucleus. It is found in the virion membrane. The catalysed reaction is Autocatalytic release of the core protein from the N-terminus of the togavirus structural polyprotein by hydrolysis of a -Trp-|-Ser- bond.. In terms of biological role, forms an icosahedral capsid with a T=4 symmetry composed of 240 copies of the capsid protein surrounded by a lipid membrane through which penetrate 80 spikes composed of trimers of E1-E2 heterodimers. The capsid protein binds to the viral RNA genome at a site adjacent to a ribosome binding site for viral genome translation following genome release. Possesses a protease activity that results in its autocatalytic cleavage from the nascent structural protein. Following its self-cleavage, the capsid protein transiently associates with ribosomes, and within several minutes the protein binds to viral RNA and rapidly assembles into icosahedric core particles. The resulting nucleocapsid eventually associates with the cytoplasmic domain of the spike glycoprotein E2 at the cell membrane, leading to budding and formation of mature virions. In case of infection, new virions attach to target cells and after clathrin-mediated endocytosis their membrane fuses with the host endosomal membrane. This leads to the release of the nucleocapsid into the cytoplasm, followed by an uncoating event necessary for the genomic RNA to become accessible. The uncoating might be triggered by the interaction of capsid proteins with ribosomes. Binding of ribosomes would release the genomic RNA since the same region is genomic RNA-binding and ribosome-binding. Specifically inhibits interleukin-1 receptor-associated kinase 1/IRAK1-dependent signaling during viral entry, representing a means by which the alphaviruses may evade innate immune detection and activation prior to viral gene expression. Its function is as follows. Provides the signal sequence for the translocation of the precursor of protein E3/E2 to the host endoplasmic reticulum. Furin-cleaved E3 remains associated with spike glycoprotein E1 and mediates pH protection of the latter during the transport via the secretory pathway. After virion release from the host cell, the assembly protein E3 is gradually released in the extracellular space. Functionally, plays a role in viral attachment to target host cell, by binding to the cell receptor. Synthesized as a p62 precursor which is processed by furin at the cell membrane just before virion budding, giving rise to E2-E1 heterodimer. The p62-E1 heterodimer is stable, whereas E2-E1 is unstable and dissociate at low pH. p62 is processed at the last step, presumably to avoid E1 fusion activation before its final export to cell surface. E2 C-terminus contains a transitory transmembrane that would be disrupted by palmitoylation, resulting in reorientation of the C-terminal tail from lumenal to cytoplasmic side. This step is critical since E2 C-terminus is involved in budding by interacting with capsid proteins. This release of E2 C-terminus in cytoplasm occurs lately in protein export, and precludes premature assembly of particles at the endoplasmic reticulum membrane. Plays a role in viral assembly and release. The chain is Frameshifted structural polyprotein from Aedes aegypti (Yellowfever mosquito).